Here is a 179-residue protein sequence, read N- to C-terminus: Large ribosomal subunit protein uL6 (179 aa).

Belongs to the universal ribosomal protein uL6 family. As to quaternary structure, part of the 50S ribosomal subunit.

This protein binds to the 23S rRNA, and is important in its secondary structure. It is located near the subunit interface in the base of the L7/L12 stalk, and near the tRNA binding site of the peptidyltransferase center. The polypeptide is Large ribosomal subunit protein uL6 (Synechocystis sp. (strain ATCC 27184 / PCC 6803 / Kazusa)).